The primary structure comprises 465 residues: Anthocyanidin 3-O-glucosyltransferase 2 (465 aa).

Catalysis depends on His-22, which acts as the Proton acceptor. His-22 and Gln-87 together coordinate an anthocyanidin. Asp-122 (charge relay) is an active-site residue. Thr-145 is a UDP-alpha-D-glucose binding site. An an anthocyanidin-binding site is contributed by His-154. Residues Ala-345, Gln-347, His-362, Trp-365, Asn-366, Ser-367, and Glu-370 each coordinate UDP-alpha-D-glucose. Gly-385 lines the an anthocyanidin pocket. The UDP-alpha-D-glucose site is built by Asp-386 and Gln-387.

This sequence belongs to the UDP-glycosyltransferase family. Highest expression detected in fruit, with very low levels detected in petal and leaf.

The enzyme catalyses an anthocyanidin + UDP-alpha-D-glucose + H(+) = an anthocyanidin 3-O-beta-D-glucoside + UDP. It carries out the reaction pelargonidin + UDP-alpha-D-glucose = pelargonidin 3-O-beta-D-glucoside + UDP. The catalysed reaction is cyanidin + UDP-alpha-D-glucose = cyanidin 3-O-beta-D-glucoside + UDP + H(+). It functions in the pathway pigment biosynthesis; anthocyanin biosynthesis. Its function is as follows. In the presence of other necessary color factors, this glycosylation reaction allows the accumulation of anthocyanin pigments. Anthocyanidins are the preferred substrates, while flavonols are only a minor substrate in vitro. The protein is Anthocyanidin 3-O-glucosyltransferase 2 of Fragaria ananassa (Strawberry).